We begin with the raw amino-acid sequence, 86 residues long: Large ribosomal subunit protein bL27 (86 aa).

A disordered region spans residues 1-26 (MATKKAGGSSRNGRDSAGRRLGVKKS).

The protein belongs to the bacterial ribosomal protein bL27 family.

The protein is Large ribosomal subunit protein bL27 of Rickettsia akari (strain Hartford).